The chain runs to 502 residues: Probable cytosol aminopeptidase (502 aa).

Mn(2+)-binding residues include lysine 275 and aspartate 280. The active site involves lysine 287. Mn(2+) is bound by residues aspartate 298, aspartate 357, and glutamate 359. Arginine 361 is an active-site residue.

Belongs to the peptidase M17 family. Requires Mn(2+) as cofactor.

The protein resides in the cytoplasm. It catalyses the reaction Release of an N-terminal amino acid, Xaa-|-Yaa-, in which Xaa is preferably Leu, but may be other amino acids including Pro although not Arg or Lys, and Yaa may be Pro. Amino acid amides and methyl esters are also readily hydrolyzed, but rates on arylamides are exceedingly low.. It carries out the reaction Release of an N-terminal amino acid, preferentially leucine, but not glutamic or aspartic acids.. Presumably involved in the processing and regular turnover of intracellular proteins. Catalyzes the removal of unsubstituted N-terminal amino acids from various peptides. This chain is Probable cytosol aminopeptidase, found in Ralstonia pickettii (strain 12J).